We begin with the raw amino-acid sequence, 855 residues long: DNA mismatch repair protein MutS (855 aa).

Residue 616 to 623 participates in ATP binding; the sequence is GPNMGGKS.

It belongs to the DNA mismatch repair MutS family.

Its function is as follows. This protein is involved in the repair of mismatches in DNA. It is possible that it carries out the mismatch recognition step. This protein has a weak ATPase activity. This chain is DNA mismatch repair protein MutS, found in Escherichia coli O139:H28 (strain E24377A / ETEC).